The sequence spans 279 residues: uncharacterized protein (279 aa).

Transmembrane regions (helical) follow at residues 29–49, 77–97, 105–125, 147–167, 186–206, and 240–260; these read PYNM…ALVF, VLYA…GTSL, WTKM…IIVT, VLGI…TGAV, TIGP…AIAF, and PIAG…VEMV.

This sequence belongs to the DcuC/DcuD transporter (TC 2.A.61) family.

It is found in the cell membrane. This is an uncharacterized protein from Haemophilus influenzae (strain ATCC 51907 / DSM 11121 / KW20 / Rd).